Reading from the N-terminus, the 246-residue chain is Uridylate kinase (246 aa).

16–19 (KFSG) is an ATP binding site. Residue Gly58 participates in UMP binding. ATP contacts are provided by Gly59 and Arg63. UMP is bound by residues Asp78 and 139 to 146 (TGNPFFTT). ATP-binding residues include Thr166, Tyr172, and Asp175.

The protein belongs to the UMP kinase family. In terms of assembly, homohexamer.

It is found in the cytoplasm. It catalyses the reaction UMP + ATP = UDP + ADP. It participates in pyrimidine metabolism; CTP biosynthesis via de novo pathway; UDP from UMP (UMPK route): step 1/1. With respect to regulation, inhibited by UTP. Functionally, catalyzes the reversible phosphorylation of UMP to UDP. In Legionella pneumophila (strain Corby), this protein is Uridylate kinase.